Reading from the N-terminus, the 349-residue chain is Isopentenyl-diphosphate delta-isomerase (349 aa).

9–10 provides a ligand contact to substrate; that stretch reads RK. Residues 65–67, S95, and N124 each bind FMN; that span reads AMT. Residue 95-97 coordinates substrate; that stretch reads STH. Q154 contacts substrate. Mg(2+) is bound at residue E155. Residues K186, S211, T216, 262-264, and 283-284 contribute to the FMN site; these read GVR and SR.

The protein belongs to the IPP isomerase type 2 family. Homooctamer. Dimer of tetramers. FMN is required as a cofactor. The cofactor is NADPH. Requires Mg(2+) as cofactor.

Its subcellular location is the cytoplasm. The catalysed reaction is isopentenyl diphosphate = dimethylallyl diphosphate. Involved in the biosynthesis of isoprenoids. Catalyzes the 1,3-allylic rearrangement of the homoallylic substrate isopentenyl (IPP) to its allylic isomer, dimethylallyl diphosphate (DMAPP). The protein is Isopentenyl-diphosphate delta-isomerase of Staphylococcus haemolyticus (strain JCSC1435).